Here is a 224-residue protein sequence, read N- to C-terminus: A-factor barrier protein 1 (224 aa).

Residues 1–25 (MIFAPSFSLIKNILLVSFLISHSFA) form the signal peptide. Residues Asn148, Asn181, and Asn191 are each glycosylated (N-linked (GlcNAc...) asparagine). Asn203 is lipidated: GPI-anchor amidated asparagine. The propeptide at 204–224 (GAHAKSLYFPMALFGIFAVAL) is removed in mature form.

Belongs to the SRP1/TIP1 family. Post-translationally, the GPI-anchor is attached to the protein in the endoplasmic reticulum and serves to target the protein to the cell surface. There, the glucosamine-inositol phospholipid moiety is cleaved off and the GPI-modified mannoprotein is covalently attached via its lipidless GPI glycan remnant to the 1,6-beta-glucan of the outer cell wall layer.

It localises to the secreted. The protein resides in the cell wall. Its subcellular location is the membrane. Functionally, MATalpha-specific protein that interferes with a-factor, the pheromone secreted by MATa cells. Contributes to mating efficiency. Acts to bind and sequester a-factor rather than to degrade it, and promotes the efficient mating of MATalpha cells by keeping the a-factor concentration at the plasma membrane within the narrow range needed for accurate pheromone gradient detection. This is A-factor barrier protein 1 from Saccharomyces cerevisiae (strain ATCC 204508 / S288c) (Baker's yeast).